Consider the following 990-residue polypeptide: Bacteriophage adsorption protein A (990 aa).

Residues 1-27 form the signal peptide; it reads MKENNLNRVIGWSGLLLTSLLSTSALA. 3 TPR repeats span residues 81–114, 612–645, and 646–679; these read IPLT…HPGD, ANAY…EPNN, and SNTQ…LPDD.

In terms of assembly, (Microbial infection) Interacts with N4 phage non-contractile sheath protein; this interaction is essential for viral adsorption to the host.

The protein resides in the cell outer membrane. Functionally, (Microbial infection) Allows N4 phage attachment by binding to the viral non-contractile sheath protein. The polypeptide is Bacteriophage adsorption protein A (nfrA) (Escherichia coli (strain K12)).